A 125-amino-acid chain; its full sequence is Small ribosomal subunit protein uS12 (125 aa).

Aspartate 89 carries the 3-methylthioaspartic acid modification. The tract at residues 104 to 125 (TAGVKDRSQSRSKYGAKASKQD) is disordered.

The protein belongs to the universal ribosomal protein uS12 family. In terms of assembly, part of the 30S ribosomal subunit. Contacts proteins S8 and S17. May interact with IF1 in the 30S initiation complex.

In terms of biological role, with S4 and S5 plays an important role in translational accuracy. Functionally, interacts with and stabilizes bases of the 16S rRNA that are involved in tRNA selection in the A site and with the mRNA backbone. Located at the interface of the 30S and 50S subunits, it traverses the body of the 30S subunit contacting proteins on the other side and probably holding the rRNA structure together. The combined cluster of proteins S8, S12 and S17 appears to hold together the shoulder and platform of the 30S subunit. The protein is Small ribosomal subunit protein uS12 of Prochlorococcus marinus (strain MIT 9303).